Here is a 129-residue protein sequence, read N- to C-terminus: Serum amyloid A protein (129 aa).

The first 18 residues, 1 to 18 (MKLFTGLVFCSLVLGVSS), serve as a signal peptide directing secretion. Q19 is subject to Pyrrolidone carboxylic acid. Residues 88–129 (FFRHGNSGHGAEDSKADQAANEWGRSGKDPNHFRPAGLPSKY) are disordered. A propeptide spans 112–129 (RSGKDPNHFRPAGLPSKY) (often cleaved during amyloidogenesis).

The protein belongs to the SAA family. Expressed by the liver; secreted in plasma.

The protein resides in the secreted. Functionally, major acute phase reactant. Apolipoprotein of the HDL complex. This chain is Serum amyloid A protein (SAA1), found in Felis catus (Cat).